We begin with the raw amino-acid sequence, 154 residues long: 6,7-dimethyl-8-ribityllumazine synthase (154 aa).

5-amino-6-(D-ribitylamino)uracil contacts are provided by residues F22, 56 to 58, and 80 to 82; these read AFE and AVI. (2S)-2-hydroxy-3-oxobutyl phosphate is bound at residue 85 to 86; it reads ET. Catalysis depends on H88, which acts as the Proton donor. F113 contacts 5-amino-6-(D-ribitylamino)uracil. R127 is a (2S)-2-hydroxy-3-oxobutyl phosphate binding site.

This sequence belongs to the DMRL synthase family.

It catalyses the reaction (2S)-2-hydroxy-3-oxobutyl phosphate + 5-amino-6-(D-ribitylamino)uracil = 6,7-dimethyl-8-(1-D-ribityl)lumazine + phosphate + 2 H2O + H(+). It participates in cofactor biosynthesis; riboflavin biosynthesis; riboflavin from 2-hydroxy-3-oxobutyl phosphate and 5-amino-6-(D-ribitylamino)uracil: step 1/2. Functionally, catalyzes the formation of 6,7-dimethyl-8-ribityllumazine by condensation of 5-amino-6-(D-ribitylamino)uracil with 3,4-dihydroxy-2-butanone 4-phosphate. This is the penultimate step in the biosynthesis of riboflavin. The chain is 6,7-dimethyl-8-ribityllumazine synthase from Thermoanaerobacter pseudethanolicus (strain ATCC 33223 / 39E) (Clostridium thermohydrosulfuricum).